A 272-amino-acid chain; its full sequence is Tryptophan synthase alpha chain (272 aa).

Catalysis depends on proton acceptor residues Glu53 and Asp64.

This sequence belongs to the TrpA family. Tetramer of two alpha and two beta chains.

It catalyses the reaction (1S,2R)-1-C-(indol-3-yl)glycerol 3-phosphate + L-serine = D-glyceraldehyde 3-phosphate + L-tryptophan + H2O. The protein operates within amino-acid biosynthesis; L-tryptophan biosynthesis; L-tryptophan from chorismate: step 5/5. The alpha subunit is responsible for the aldol cleavage of indoleglycerol phosphate to indole and glyceraldehyde 3-phosphate. In Xanthomonas campestris pv. campestris (strain 8004), this protein is Tryptophan synthase alpha chain.